The following is a 98-amino-acid chain: Alpha-elicitin hibernalin (98 aa).

3 disulfide bridges follow: cysteine 3–cysteine 71, cysteine 27–cysteine 56, and cysteine 51–cysteine 95.

It localises to the secreted. Induces local and distal defense responses (incompatible hypersensitive reaction) in plants from the solanaceae and cruciferae families. Elicits leaf necrosis and causes the accumulation of pathogenesis-related proteins. Might interact with the lipidic molecules of the plasma membrane. The sequence is that of Alpha-elicitin hibernalin from Phytophthora hibernalis.